The chain runs to 728 residues: Tripartite terminase subunit 1 (728 aa).

A C3H1-type zinc finger spans residues 186 to 214; the sequence is CASCFAEAAMLPNQGESVLSMLAAVNCNH. Residues 239-278 are disordered; it reads ARAAGRAGGGRESERRGREDADDEEDDEEEPRDGQGDAGD. Positions 247–257 are enriched in basic and acidic residues; that stretch reads GGRESERRGRE. Positions 258–269 are enriched in acidic residues; sequence DADDEEDDEEEP. ATP is bound at residue 653 to 660; the sequence is YNRVWEKS.

The protein belongs to the herpesviridae TRM1 protein family. As to quaternary structure, associates with TRM2 and TRM3 to form the tripartite terminase complex. Interacts with portal protein.

The protein resides in the host nucleus. Its function is as follows. Component of the molecular motor that translocates viral genomic DNA in empty capsid during DNA packaging. Forms a tripartite terminase complex together with TRM2 and TRM3 in the host cytoplasm. Once the complex reaches the host nucleus, it interacts with the capsid portal vertex. This portal forms a ring in which genomic DNA is translocated into the capsid. TRM1 carries an endonuclease activity that plays an important role for the cleavage of concatemeric viral DNA into unit length genomes. The chain is Tripartite terminase subunit 1 from Equine herpesvirus 2 (strain 86/87) (EHV-2).